The primary structure comprises 434 residues: UDP-N-acetylglucosamine 1-carboxyvinyltransferase (434 aa).

Residue 34 to 35 (KN) participates in phosphoenolpyruvate binding. Arginine 104 contributes to the UDP-N-acetyl-alpha-D-glucosamine binding site. Residue cysteine 128 is the Proton donor of the active site. Cysteine 128 bears the 2-(S-cysteinyl)pyruvic acid O-phosphothioketal mark. UDP-N-acetyl-alpha-D-glucosamine is bound by residues aspartate 319 and isoleucine 341.

This sequence belongs to the EPSP synthase family. MurA subfamily.

The protein resides in the cytoplasm. The enzyme catalyses phosphoenolpyruvate + UDP-N-acetyl-alpha-D-glucosamine = UDP-N-acetyl-3-O-(1-carboxyvinyl)-alpha-D-glucosamine + phosphate. It participates in cell wall biogenesis; peptidoglycan biosynthesis. Functionally, cell wall formation. Adds enolpyruvyl to UDP-N-acetylglucosamine. The protein is UDP-N-acetylglucosamine 1-carboxyvinyltransferase of Prochlorococcus marinus (strain MIT 9313).